Here is a 336-residue protein sequence, read N- to C-terminus: MTTMLEVAKRAGVSKATVSRVLSGNGYVSQETKDRVFQAVEESGYRPNLLARNLSAKSTQTLGLVVTNTLYHGIYFSELLFHAARMAEEKGRQLLLADGKHSAEEERQAIQYLLDLRCDAIMIYPRFLSVDEIDDIIDAHSQPIMVLNRRLRKNSSHSVWCDHKQTSFNAVAELINAGHQEIAFLTGSMDSPTSIERLAGYKDALAQHGIALNEKLIANGKWTPASGAEGVEMLLERGAKFSALVASNDDMAIGAMKALHERGVAVPEQVSVIGFDDIAIAPYTVPALSSVKIPVTEMIQEIIGRLIFMLDGGDFSPPKTFSGKLIRRDSLIAPSR.

In terms of domain architecture, HTH lacI-type spans 2–56; sequence TTMLEVAKRAGVSKATVSRVLSGNGYVSQETKDRVFQAVEESGYRPNLLARNLSA. A DNA-binding region (H-T-H motif) is located at residues 4-23; the sequence is MLEVAKRAGVSKATVSRVLS.

In terms of biological role, repressor of the asc operon. The cryptic operon is activated by the insertion of IS186 into the ascG gene. This chain is HTH-type transcriptional regulator AscG (ascG), found in Escherichia coli (strain K12).